The chain runs to 289 residues: Probable phosphoribulokinase (289 aa).

12-20 (GSSGAGTTT) is a binding site for ATP.

The protein belongs to the phosphoribulokinase family.

The catalysed reaction is D-ribulose 5-phosphate + ATP = D-ribulose 1,5-bisphosphate + ADP + H(+). This is Probable phosphoribulokinase (prkB) from Escherichia coli (strain K12).